The chain runs to 145 residues: MIALIQRALSANVVVDGEVVGEIGPGLLILLGVEQQDTEQKAQRLCEKVLGYRIFGDENDKMNLNVKQAGGSVLVVSQFTLVADTQKGMRPSFSRGASPAEADRLYQYFVAQCREHGVKTETGLFAADMKVSLVNDGPVTFWLQI.

Residues 137-138 carry the Gly-cisPro motif, important for rejection of L-amino acids motif; that stretch reads GP.

This sequence belongs to the DTD family. As to quaternary structure, homodimer.

It localises to the cytoplasm. The enzyme catalyses glycyl-tRNA(Ala) + H2O = tRNA(Ala) + glycine + H(+). It catalyses the reaction a D-aminoacyl-tRNA + H2O = a tRNA + a D-alpha-amino acid + H(+). Its function is as follows. An aminoacyl-tRNA editing enzyme that deacylates mischarged D-aminoacyl-tRNAs. Also deacylates mischarged glycyl-tRNA(Ala), protecting cells against glycine mischarging by AlaRS. Acts via tRNA-based rather than protein-based catalysis; rejects L-amino acids rather than detecting D-amino acids in the active site. By recycling D-aminoacyl-tRNA to D-amino acids and free tRNA molecules, this enzyme counteracts the toxicity associated with the formation of D-aminoacyl-tRNA entities in vivo and helps enforce protein L-homochirality. This chain is D-aminoacyl-tRNA deacylase, found in Yersinia enterocolitica serotype O:8 / biotype 1B (strain NCTC 13174 / 8081).